Reading from the N-terminus, the 611-residue chain is MPFLDHRTGPSYGTIDQMEQHSDDEGERFLQEQCDTGRFSSDITSISEDSVQEGVRKIEAINLTWTARSLVIAYVSIFLMSFCTSLEGQTVMSLGAYATSAFSKHSLISTVLVVQNVVNAVIKPPMAKVADVFGRFEAFCVSILIYVLGYIQMAASTNVQTYASAQIFYSAGSTGLQILQQVFIADSSNLLNRAFLALLPEFPFLVTVWIGPTIADAVLKHASWRWGYGMWSIILPASFLPLALSLLLNQRKARRLNLIKPKSRPRGGVFAVLRRTWYDLDMGGLILLSAAVTLILVPLTLAANSKNGWKSDSIVAMIVVGLFCLIALPFWESSKRLAPKPLLSLHLLKQRTALAGCTLAFWYFMAFYFSVQPYFYSYLQVVQGYDVATAGRVTQTFAFTSTIAAFAVSILIKYTRRYRAFVIAGCVVYIIGMVLMMVTRHEGSTPAQILVTQVVVGIGGGLLNVPVQLGVQASASHQEVAAATAMFLTSMEMGGAVGAALSGAVWTHNIPRKLRLYLPEENKGDADAIFGKITKALSYPLGSPVRVAINQAYQETFKKLLILALIAIIPLVPLSLAMEDYKLDKMSEEPLVDPVPAEEGEIEPNRHVKRT.

The segment at 1–25 is disordered; it reads MPFLDHRTGPSYGTIDQMEQHSDDE. Asn-62 carries an N-linked (GlcNAc...) asparagine glycan. The next 14 membrane-spanning stretches (helical) occupy residues 71–91, 107–127, 136–156, 165–185, 194–214, 228–248, 282–302, 313–333, 353–373, 393–413, 418–438, 449–469, 486–506, and 560–580; these read VIAY…GQTV, LIST…PPMA, FEAF…MAAS, AQIF…VFIA, AFLA…GPTI, YGMW…SLLL, MGGL…LTLA, SIVA…FWES, ALAG…SVQP, VTQT…ILIK, YRAF…LMMV, ILVT…PVQL, MFLT…GAVW, and LLIL…AMED. The segment at 592–611 is disordered; sequence VDPVPAEEGEIEPNRHVKRT.

Belongs to the major facilitator superfamily.

Its subcellular location is the membrane. Functionally, major facilitator transporter that contributes to the maintenance of intracellular siderophore ferricrocin (FC) levels. Plays a role in conidiation and confers protection against oxidative stress. Also contributes to fungal virulence in the Galleria mellonella animal model system. Does not appear to play a role in either siderophore export or uptake. The protein is MFS siderochrome iron transporter C of Aspergillus fumigatus (strain ATCC MYA-4609 / CBS 101355 / FGSC A1100 / Af293) (Neosartorya fumigata).